The chain runs to 378 residues: Dual-specificity RNA methyltransferase RlmN (378 aa).

The active-site Proton acceptor is the E95. In terms of domain architecture, Radical SAM core spans 101-345 (EETRGTLCVS…TTIRKTRGDD (245 aa)). C108 and C350 form a disulfide bridge. [4Fe-4S] cluster is bound by residues C115, C119, and C122. S-adenosyl-L-methionine is bound by residues 176–177 (GE), S208, 230–232 (SLH), and N307. C350 (S-methylcysteine intermediate) is an active-site residue.

Belongs to the radical SAM superfamily. RlmN family. It depends on [4Fe-4S] cluster as a cofactor.

It is found in the cytoplasm. It carries out the reaction adenosine(2503) in 23S rRNA + 2 reduced [2Fe-2S]-[ferredoxin] + 2 S-adenosyl-L-methionine = 2-methyladenosine(2503) in 23S rRNA + 5'-deoxyadenosine + L-methionine + 2 oxidized [2Fe-2S]-[ferredoxin] + S-adenosyl-L-homocysteine. It catalyses the reaction adenosine(37) in tRNA + 2 reduced [2Fe-2S]-[ferredoxin] + 2 S-adenosyl-L-methionine = 2-methyladenosine(37) in tRNA + 5'-deoxyadenosine + L-methionine + 2 oxidized [2Fe-2S]-[ferredoxin] + S-adenosyl-L-homocysteine. Its function is as follows. Specifically methylates position 2 of adenine 2503 in 23S rRNA and position 2 of adenine 37 in tRNAs. m2A2503 modification seems to play a crucial role in the proofreading step occurring at the peptidyl transferase center and thus would serve to optimize ribosomal fidelity. This is Dual-specificity RNA methyltransferase RlmN from Burkholderia thailandensis (strain ATCC 700388 / DSM 13276 / CCUG 48851 / CIP 106301 / E264).